We begin with the raw amino-acid sequence, 93 residues long: UPF0297 protein PEPE_1262 (93 aa).

It belongs to the UPF0297 family.

The protein is UPF0297 protein PEPE_1262 of Pediococcus pentosaceus (strain ATCC 25745 / CCUG 21536 / LMG 10740 / 183-1w).